A 370-amino-acid polypeptide reads, in one-letter code: Pyrimidine monooxygenase RutA (370 aa).

FMN is bound by residues 49–50 (IK), Asn-115, Glu-124, 140–141 (RY), and Ser-190.

The protein belongs to the NtaA/SnaA/DszA monooxygenase family. RutA subfamily.

The catalysed reaction is uracil + FMNH2 + NADH + O2 = (Z)-3-ureidoacrylate + FMN + NAD(+) + H2O + H(+). The enzyme catalyses thymine + FMNH2 + NADH + O2 = (Z)-2-methylureidoacrylate + FMN + NAD(+) + H2O + H(+). Catalyzes the pyrimidine ring opening between N-3 and C-4 by an unusual flavin hydroperoxide-catalyzed mechanism, adding oxygen atoms in the process to yield ureidoacrylate peracid, that immediately reacts with FMN forming ureidoacrylate and FMN-N(5)-oxide. The FMN-N(5)-oxide reacts spontaneously with NADH to produce FMN. Requires the flavin reductase RutF to regenerate FMN in vivo. The sequence is that of Pyrimidine monooxygenase RutA from Variovorax paradoxus (strain S110).